An 82-amino-acid chain; its full sequence is Antitoxin MazE8 (82 aa).

In terms of assembly, forms a complex with cognate toxin MazF8.

Its function is as follows. Antitoxin component of a type II toxin-antitoxin (TA) system. Its cognate toxin is MazF8. This Mycobacterium tuberculosis (strain ATCC 25618 / H37Rv) protein is Antitoxin MazE8 (mazE8).